Reading from the N-terminus, the 368-residue chain is Protein tesmin/TSO1-like CXC 8 (368 aa).

Positions 64–185 (KHKGCRCKQS…KCINCKNVSE (122 aa)) constitute a CRC domain.

Belongs to the lin-54 family.

The protein resides in the nucleus. Functionally, plays a role in development of both male and female reproductive tissues. This chain is Protein tesmin/TSO1-like CXC 8 (TCX8), found in Arabidopsis thaliana (Mouse-ear cress).